Here is a 351-residue protein sequence, read N- to C-terminus: Methylthioribose-1-phosphate isomerase (351 aa).

Residues R53–A55, R96, and Q205 contribute to the substrate site. The active-site Proton donor is the D246. Residue N256 to K257 coordinates substrate.

It belongs to the eIF-2B alpha/beta/delta subunits family. MtnA subfamily.

The enzyme catalyses 5-(methylsulfanyl)-alpha-D-ribose 1-phosphate = 5-(methylsulfanyl)-D-ribulose 1-phosphate. Its pathway is amino-acid biosynthesis; L-methionine biosynthesis via salvage pathway; L-methionine from S-methyl-5-thio-alpha-D-ribose 1-phosphate: step 1/6. In terms of biological role, catalyzes the interconversion of methylthioribose-1-phosphate (MTR-1-P) into methylthioribulose-1-phosphate (MTRu-1-P). In Synechocystis sp. (strain ATCC 27184 / PCC 6803 / Kazusa), this protein is Methylthioribose-1-phosphate isomerase.